The primary structure comprises 117 residues: Ig heavy chain V region MOO (117 aa).

In terms of domain architecture, Ig-like spans 1-116 (EVKLVESGGD…FGQGTIVTVS (116 aa)).

This chain is Ig heavy chain V region MOO, found in Canis lupus familiaris (Dog).